A 545-amino-acid polypeptide reads, in one-letter code: Chaperonin GroEL 4 (545 aa).

ATP contacts are provided by residues 30–33, Lys-51, 87–91, Gly-415, and Asp-495; these read TLGP and DGTTT.

It belongs to the chaperonin (HSP60) family. Forms a cylinder of 14 subunits composed of two heptameric rings stacked back-to-back. Interacts with the co-chaperonin GroES.

The protein localises to the cytoplasm. It carries out the reaction ATP + H2O + a folded polypeptide = ADP + phosphate + an unfolded polypeptide.. Together with its co-chaperonin GroES, plays an essential role in assisting protein folding. The GroEL-GroES system forms a nano-cage that allows encapsulation of the non-native substrate proteins and provides a physical environment optimized to promote and accelerate protein folding. This Rhizobium meliloti (strain 1021) (Ensifer meliloti) protein is Chaperonin GroEL 4.